Here is a 524-residue protein sequence, read N- to C-terminus: Putative ribose/galactose/methyl galactoside import ATP-binding protein 1 (524 aa).

ABC transporter domains follow at residues 29 to 270 (LEMR…VGRT) and 280 to 524 (VPIG…TGGH). Residue 61-68 (GENGAGKS) participates in ATP binding.

The protein belongs to the ABC transporter superfamily. Carbohydrate importer 2 (CUT2) (TC 3.A.1.2) family.

The protein resides in the cell inner membrane. The enzyme catalyses D-ribose(out) + ATP + H2O = D-ribose(in) + ADP + phosphate + H(+). It catalyses the reaction D-galactose(out) + ATP + H2O = D-galactose(in) + ADP + phosphate + H(+). Its function is as follows. Part of an ABC transporter complex involved in carbohydrate import. Could be involved in ribose, galactose and/or methyl galactoside import. Responsible for energy coupling to the transport system. The chain is Putative ribose/galactose/methyl galactoside import ATP-binding protein 1 from Rhizobium etli (strain ATCC 51251 / DSM 11541 / JCM 21823 / NBRC 15573 / CFN 42).